Consider the following 55-residue polypeptide: Light-harvesting polypeptide B-800/860 beta chain (55 aa).

Residues 1 to 21 (ADANKVWPTGLTVAEAEELHT) lie on the Cytoplasmic side of the membrane. A helical membrane pass occupies residues 22-44 (YVTNGFRVFVGIAVVAHVLVFAA). Residue H38 coordinates a bacteriochlorophyll. At 45–55 (HPWGRGGALVA) the chain is on the periplasmic side.

The protein belongs to the antenna complex beta subunit family. In terms of assembly, the core complex is formed by different alpha and beta chains, binding bacteriochlorophyll molecules, and arranged most probably in tetrameric structures disposed around the reaction center. The non-pigmented gamma chains may constitute additional components.

Its subcellular location is the cell inner membrane. Functionally, antenna complexes are light-harvesting systems, which transfer the excitation energy to the reaction centers. The polypeptide is Light-harvesting polypeptide B-800/860 beta chain (Rhodocyclus tenuis (Rhodospirillum tenue)).